The primary structure comprises 280 residues: Energy-coupling factor transporter ATP-binding protein EcfA1 (280 aa).

In terms of domain architecture, ABC transporter spans Ile6–Asp244. Gly43–Ser50 is an ATP binding site.

It belongs to the ABC transporter superfamily. Energy-coupling factor EcfA family. In terms of assembly, forms a stable energy-coupling factor (ECF) transporter complex composed of 2 membrane-embedded substrate-binding proteins (S component), 2 ATP-binding proteins (A component) and 2 transmembrane proteins (T component).

It is found in the cell membrane. Its function is as follows. ATP-binding (A) component of a common energy-coupling factor (ECF) ABC-transporter complex. Unlike classic ABC transporters this ECF transporter provides the energy necessary to transport a number of different substrates. This Clostridium novyi (strain NT) protein is Energy-coupling factor transporter ATP-binding protein EcfA1.